Reading from the N-terminus, the 281-residue chain is Bifunctional protein FolD (281 aa).

Residues 164–166 (GRS) and Ser-189 each bind NADP(+).

It belongs to the tetrahydrofolate dehydrogenase/cyclohydrolase family. As to quaternary structure, homodimer.

The catalysed reaction is (6R)-5,10-methylene-5,6,7,8-tetrahydrofolate + NADP(+) = (6R)-5,10-methenyltetrahydrofolate + NADPH. It carries out the reaction (6R)-5,10-methenyltetrahydrofolate + H2O = (6R)-10-formyltetrahydrofolate + H(+). The protein operates within one-carbon metabolism; tetrahydrofolate interconversion. In terms of biological role, catalyzes the oxidation of 5,10-methylenetetrahydrofolate to 5,10-methenyltetrahydrofolate and then the hydrolysis of 5,10-methenyltetrahydrofolate to 10-formyltetrahydrofolate. This is Bifunctional protein FolD from Enterococcus faecalis (strain ATCC 700802 / V583).